The sequence spans 353 residues: Rhodopsin (353 aa).

The Extracellular portion of the chain corresponds to 1–36 (MNGTEGPYFYVPMVNTSGIVRSPYEYPQYYLVNPAA). Asn-2 and Asn-15 each carry an N-linked (GlcNAc...) asparagine glycan. A helical membrane pass occupies residues 37–61 (YARLGAYMFLLILVGFPINFLTLYV). Residues 62–73 (TIEHKKLRTPLN) are Cytoplasmic-facing. Residues 74–96 (YILLNLAVADLFMVFGGFTTTMY) form a helical membrane-spanning segment. At 97–110 (TSMHGYFVLGRLGC) the chain is on the extracellular side. Cys-110 and Cys-187 form a disulfide bridge. The helical transmembrane segment at 111–133 (NIEGFFATLGGEIALWSLVVLAI) threads the bilayer. Positions 134-136 (ERW) match the 'Ionic lock' involved in activated form stabilization motif. Topologically, residues 134 to 152 (ERWVVVCKPISNFRFGENH) are cytoplasmic. Residues 153 to 173 (AIMGLAFTWLMALACAAPPLV) form a helical membrane-spanning segment. The Extracellular portion of the chain corresponds to 174-202 (GWSRYIPEGMQCSCGIDYYTRAEGFNNES). The N-linked (GlcNAc...) asparagine glycan is linked to Asn-200. A helical transmembrane segment spans residues 203–224 (FVIYMFVCHFTVPLMVVFFCYG). Over 225–252 (RLLCAVKEAAAAQQESETTQRAEREVTR) the chain is Cytoplasmic. Residues 253–274 (MVIMMVVAFLVCWLPYASVAWW) traverse the membrane as a helical segment. At 275–286 (IFTHQGSEFGPV) the chain is on the extracellular side. A helical transmembrane segment spans residues 287 to 308 (FMTIPAFFAKSSSIYNPMIYIC). Residue Lys-296 is modified to N6-(retinylidene)lysine. At 309–353 (LNKQFRHCMITTLCCGKNPFEEEEGASTASKTEASSVSSSSVSPA) the chain is on the cytoplasmic side. Residues Cys-322 and Cys-323 are each lipidated (S-palmitoyl cysteine). The segment at 331–353 (EEGASTASKTEASSVSSSSVSPA) is disordered. Over residues 334–353 (ASTASKTEASSVSSSSVSPA) the composition is skewed to low complexity.

It belongs to the G-protein coupled receptor 1 family. Opsin subfamily. Post-translationally, phosphorylated on some or all of the serine and threonine residues present in the C-terminal region. Contains one covalently linked retinal chromophore.

The protein localises to the membrane. It localises to the cell projection. The protein resides in the cilium. It is found in the photoreceptor outer segment. Its function is as follows. Photoreceptor required for image-forming vision at low light intensity. While most salt water fish species use retinal as chromophore, most freshwater fish use 3-dehydroretinal, or a mixture of retinal and 3-dehydroretinal. Light-induced isomerization of 11-cis to all-trans retinal triggers a conformational change that activates signaling via G-proteins. Subsequent receptor phosphorylation mediates displacement of the bound G-protein alpha subunit by arrestin and terminates signaling. The protein is Rhodopsin (rho) of Sarpa salpa (Salema).